A 1028-amino-acid chain; its full sequence is Protein SMAX1-LIKE 5 (1028 aa).

Residues 8 to 199 (IQQTLTTEAA…CVEDCSVSSV (192 aa)) enclose the Clp R domain. Repeat regions lie at residues 12 to 102 (LTTE…LNRL) and 116 to 199 (LANA…VSSV). Residues 871–875 (LDLNI) carry the EAR motif.

The protein belongs to the ClpA/ClpB family. Interacts probably with TPL/TPR in an EAR-motif dependent manner. As to expression, detected in roots, seedlings and axillary branches.

Its function is as follows. May function in a transcriptional corepressor complex. This is Protein SMAX1-LIKE 5 from Arabidopsis thaliana (Mouse-ear cress).